The sequence spans 402 residues: Pyridinium-3,5-bisthiocarboxylic acid mononucleotide nickel insertion protein (402 aa).

The protein belongs to the LarC family.

It catalyses the reaction Ni(II)-pyridinium-3,5-bisthiocarboxylate mononucleotide = pyridinium-3,5-bisthiocarboxylate mononucleotide + Ni(2+). Functionally, involved in the biosynthesis of a nickel-pincer cofactor ((SCS)Ni(II) pincer complex). Binds Ni(2+), and functions in nickel delivery to pyridinium-3,5-bisthiocarboxylic acid mononucleotide (P2TMN), to form the mature cofactor. Is thus probably required for the activation of nickel-pincer cofactor-dependent enzymes. The protein is Pyridinium-3,5-bisthiocarboxylic acid mononucleotide nickel insertion protein of Desulfitobacterium hafniense (strain DSM 10664 / DCB-2).